Reading from the N-terminus, the 1233-residue chain is uncharacterized protein (1233 aa).

3 disordered regions span residues 32-51 (SETS…TPKP), 510-529 (ATTN…PVPD), and 882-915 (EVIE…IERS). Composition is skewed to acidic residues over residues 513–529 (NEEE…PVPD) and 882–905 (EVIE…EDEG). Residues 906–915 (DNKQRVIERS) show a composition bias toward basic and acidic residues.

This is an uncharacterized protein from Dictyostelium discoideum (Social amoeba).